Reading from the N-terminus, the 262-residue chain is Acyl-[acyl-carrier-protein]--UDP-N-acetylglucosamine O-acyltransferase (262 aa).

It belongs to the transferase hexapeptide repeat family. LpxA subfamily. Homotrimer.

It localises to the cytoplasm. The enzyme catalyses a (3R)-hydroxyacyl-[ACP] + UDP-N-acetyl-alpha-D-glucosamine = a UDP-3-O-[(3R)-3-hydroxyacyl]-N-acetyl-alpha-D-glucosamine + holo-[ACP]. Its pathway is glycolipid biosynthesis; lipid IV(A) biosynthesis; lipid IV(A) from (3R)-3-hydroxytetradecanoyl-[acyl-carrier-protein] and UDP-N-acetyl-alpha-D-glucosamine: step 1/6. In terms of biological role, involved in the biosynthesis of lipid A, a phosphorylated glycolipid that anchors the lipopolysaccharide to the outer membrane of the cell. The protein is Acyl-[acyl-carrier-protein]--UDP-N-acetylglucosamine O-acyltransferase of Vibrio parahaemolyticus serotype O3:K6 (strain RIMD 2210633).